The chain runs to 235 residues: Orotidine 5'-phosphate decarboxylase (235 aa).

Substrate contacts are provided by residues D17, K39, 66–75 (DLKLHDIGNT), T121, R182, Q191, G211, and R212. The active-site Proton donor is the K68.

Belongs to the OMP decarboxylase family. Type 1 subfamily. As to quaternary structure, homodimer.

The catalysed reaction is orotidine 5'-phosphate + H(+) = UMP + CO2. The protein operates within pyrimidine metabolism; UMP biosynthesis via de novo pathway; UMP from orotate: step 2/2. Functionally, catalyzes the decarboxylation of orotidine 5'-monophosphate (OMP) to uridine 5'-monophosphate (UMP). This chain is Orotidine 5'-phosphate decarboxylase, found in Rhodopseudomonas palustris (strain BisB5).